A 213-amino-acid chain; its full sequence is Orotate phosphoribosyltransferase (213 aa).

K26 serves as a coordination point for 5-phospho-alpha-D-ribose 1-diphosphate. 34 to 35 (FF) serves as a coordination point for orotate. 5-phospho-alpha-D-ribose 1-diphosphate-binding positions include 72–73 (YK), R99, K100, K103, H105, and 124–132 (DDVITAGTA). Positions 128 and 156 each coordinate orotate.

The protein belongs to the purine/pyrimidine phosphoribosyltransferase family. PyrE subfamily. In terms of assembly, homodimer. Mg(2+) is required as a cofactor.

It carries out the reaction orotidine 5'-phosphate + diphosphate = orotate + 5-phospho-alpha-D-ribose 1-diphosphate. Its pathway is pyrimidine metabolism; UMP biosynthesis via de novo pathway; UMP from orotate: step 1/2. Its function is as follows. Catalyzes the transfer of a ribosyl phosphate group from 5-phosphoribose 1-diphosphate to orotate, leading to the formation of orotidine monophosphate (OMP). This Thioalkalivibrio sulfidiphilus (strain HL-EbGR7) protein is Orotate phosphoribosyltransferase.